We begin with the raw amino-acid sequence, 740 residues long: Catalase-peroxidase (740 aa).

Positions 107–229 (WHAAGTYRIH…LAAVQMGLIY (123 aa)) form a cross-link, tryptophyl-tyrosyl-methioninium (Trp-Tyr) (with M-255). The active-site Proton acceptor is the His-108. The segment at residues 229–255 (YVNPEGPNGNPDPMAAAVDIRETFRRM) is a cross-link (tryptophyl-tyrosyl-methioninium (Tyr-Met) (with W-107)). His-270 is a binding site for heme b. Trp-321 acts as the Tryptophan radical intermediate in catalysis.

This sequence belongs to the peroxidase family. Peroxidase/catalase subfamily. Homodimer. Heme b serves as cofactor. Formation of the three residue Trp-Tyr-Met cross-link is important for the catalase, but not the peroxidase activity of the enzyme.

The catalysed reaction is H2O2 + AH2 = A + 2 H2O. The enzyme catalyses 2 H2O2 = O2 + 2 H2O. In terms of biological role, bifunctional enzyme with both catalase and broad-spectrum peroxidase activity, oxidizing various electron donors including NADP(H). Protects M.tuberculosis against toxic reactive oxygen species (ROS) including hydrogen peroxide as well as organic peroxides and thus contributes to its survival within host macrophages by countering the phagocyte oxidative burst. Also displays efficient peroxynitritase activity, which may help the bacterium to persist in macrophages. Its function is as follows. Catalyzes the oxidative activation of the antitubercular pro-drug isoniazid (INH) to generate an isonicotinoyl radical that then reacts nonenzymatically with NAD to form an isonicotinoyl-NAD adduct which inhibits InhA. In Mycobacterium tuberculosis (strain CDC 1551 / Oshkosh), this protein is Catalase-peroxidase.